We begin with the raw amino-acid sequence, 186 residues long: Putative 5'(3')-deoxyribonucleotidase (186 aa).

D6 (nucleophile) is an active-site residue. Residues D6, D8, and D137 each coordinate Mg(2+). D8 functions as the Proton donor in the catalytic mechanism.

Belongs to the 5'(3')-deoxyribonucleotidase family. Mg(2+) serves as cofactor.

Functionally, dephosphorylates the 5' and 2'(3')-phosphates of deoxyribonucleotides. This chain is Putative 5'(3')-deoxyribonucleotidase, found in Bordetella pertussis (strain Tohama I / ATCC BAA-589 / NCTC 13251).